Reading from the N-terminus, the 79-residue chain is Schistosomin (79 aa).

Contains four disulfide bonds. In terms of tissue distribution, growth-controlling neurosecretory light green cells, in the cerebral ganglia of the CNS.

It localises to the secreted. Anti-gonadotropic neuropeptide. It also decreases the binding capacity of calfluxin to membrane-bound receptors of the albumen gland. This leads to inhibition of the reproductive activities of the infected snail. The protein is Schistosomin of Lymnaea stagnalis (Great pond snail).